Consider the following 420-residue polypeptide: Gamma-glutamyl phosphate reductase (420 aa).

This sequence belongs to the gamma-glutamyl phosphate reductase family.

Its subcellular location is the cytoplasm. It catalyses the reaction L-glutamate 5-semialdehyde + phosphate + NADP(+) = L-glutamyl 5-phosphate + NADPH + H(+). It functions in the pathway amino-acid biosynthesis; L-proline biosynthesis; L-glutamate 5-semialdehyde from L-glutamate: step 2/2. In terms of biological role, catalyzes the NADPH-dependent reduction of L-glutamate 5-phosphate into L-glutamate 5-semialdehyde and phosphate. The product spontaneously undergoes cyclization to form 1-pyrroline-5-carboxylate. This Cereibacter sphaeroides (strain ATCC 17023 / DSM 158 / JCM 6121 / CCUG 31486 / LMG 2827 / NBRC 12203 / NCIMB 8253 / ATH 2.4.1.) (Rhodobacter sphaeroides) protein is Gamma-glutamyl phosphate reductase.